The following is a 307-amino-acid chain: Heme A synthase (307 aa).

At 1-6 (MKFALR) the chain is on the cytoplasmic side. The chain crosses the membrane as a helical span at residues 7-27 (LLSVITTFVMLIVLIGGALVT). Topologically, residues 28–65 (KTGSGLGCGRQWPLCHGRFFPEMNPASIIEWSHRMSTG) are extracellular. The cysteines at positions 35 and 42 are disulfide-linked. Glutamate 57 is a catalytic residue. Histidine 60 provides a ligand contact to heme o. A helical transmembrane segment spans residues 66-86 (VSTILVLALAVLCWKKISPVF). Over 87 to 92 (RETKFL) the chain is Cytoplasmic. The chain crosses the membrane as a helical span at residues 93 to 113 (VIMSIIFLLLQALLGALAVVF). The Extracellular segment spans residues 114-121 (GSNALVMA). A helical transmembrane segment spans residues 122–142 (LHFGISLISFASVLLLALLVF). Position 123 (histidine 123) interacts with heme o. Over 143–161 (EATRSETKLVKPLHIGKKM) the chain is Cytoplasmic. A helical membrane pass occupies residues 162–182 (QFHIYGLITYTYIVVYTGAYV). The Extracellular segment spans residues 183–216 (RHTKSSLACSVFPFCSKDGALPAYFNQWVQMSHR). Cysteine 191 and cysteine 197 are joined by a disulfide. Histidine 215 is a heme b binding site. A helical transmembrane segment spans residues 217–237 (AAALLLFVWIFVAMFHAMKHY). Over 238 to 242 (KEQKQ) the chain is Cytoplasmic. Residues 243-263 (LYYGWIISAILITLQAISGVM) traverse the membrane as a helical segment. Topologically, residues 264–274 (SVYSQLALGYA) are extracellular. Residues 275 to 295 (LAHSFFISCLFGVLCYFCLLI) traverse the membrane as a helical segment. Histidine 277 is a heme b binding site. The Cytoplasmic portion of the chain corresponds to 296 to 307 (ARFKYESKEPFK).

It belongs to the COX15/CtaA family. Type 1 subfamily. In terms of assembly, interacts with CtaB. Heme b serves as cofactor.

Its subcellular location is the cell membrane. It catalyses the reaction Fe(II)-heme o + 2 A + H2O = Fe(II)-heme a + 2 AH2. Its pathway is porphyrin-containing compound metabolism; heme A biosynthesis; heme A from heme O: step 1/1. Its function is as follows. Catalyzes the conversion of heme O to heme A by two successive hydroxylations of the methyl group at C8. The first hydroxylation forms heme I, the second hydroxylation results in an unstable dihydroxymethyl group, which spontaneously dehydrates, resulting in the formyl group of heme A. The chain is Heme A synthase from Bacillus pumilus (strain SAFR-032).